A 418-amino-acid chain; its full sequence is Adenylosuccinate synthetase (418 aa).

GTP is bound by residues 12-18 (GDEGKGK) and 40-42 (GHT). Catalysis depends on D13, which acts as the Proton acceptor. Positions 13 and 40 each coordinate Mg(2+). IMP contacts are provided by residues 13–16 (DEGK), 38–41 (NAGH), T128, R142, Q221, T236, and R299. H41 serves as the catalytic Proton donor. A substrate-binding site is contributed by 295-301 (ATTGRNR). Residues R301, 327-329 (KAD), and 399-401 (SYG) each bind GTP.

Belongs to the adenylosuccinate synthetase family. As to quaternary structure, homodimer. The cofactor is Mg(2+).

The protein localises to the cytoplasm. It catalyses the reaction IMP + L-aspartate + GTP = N(6)-(1,2-dicarboxyethyl)-AMP + GDP + phosphate + 2 H(+). The protein operates within purine metabolism; AMP biosynthesis via de novo pathway; AMP from IMP: step 1/2. In terms of biological role, plays an important role in the de novo pathway of purine nucleotide biosynthesis. Catalyzes the first committed step in the biosynthesis of AMP from IMP. In Finegoldia magna (strain ATCC 29328 / DSM 20472 / WAL 2508) (Peptostreptococcus magnus), this protein is Adenylosuccinate synthetase.